The chain runs to 533 residues: MTQAEIKLCSLLLQEHFGEIVEKIGVHLIRTGSQPLRVIAHDTKASLDQVKKALCVLIHHNLVIYHVHKRGVVEYEAQCSRVLRMLRYPRYIYTTKTLYGDTGELIVEELLLNGKMTMSAVVKKVADRLTETMEDGKTMDYAEVSNAFVRLADTHFVQRCPLVPDTDSSDPGPPPPAPNLVINEKDMYLVPKLSLIGKGKRRRSSDEDAAGEPKAKKPRCTDNEEPTPDDGIYWQVNLDRFHQHFRDQAIVSAVANRMDQTSSEIVRTMLRMSEITTPSGAPFTQPLSSNEIFRSLPVGYNISKQVLDQYLTLLADDPLEFIGKAGDSGGGMYVINLHKALASLSTATLESVIQERFGSRCARIFRLVLQKKHLEQKQVEDFAMIPAKEAKDMLYKMLSENFISLQEIPKTPDHAPSRTFYLYTVNVLSAARMLLHRCYKSIANLIERRQFETKENKRLLEKSQRVEAIMASMQATGAEEVQLQEIEEMITAPERQQLETLKRNVNKLDASEIQVDETIFLLESYIESTMKRQ.

The segment at 161 to 183 (PLVPDTDSSDPGPPPPAPNLVIN) is disordered. Position 194 is a phosphoserine (Ser194). The disordered stretch occupies residues 197–228 (GKGKRRRSSDEDAAGEPKAKKPRCTDNEEPTP). A compositionally biased stretch (basic and acidic residues) spans 211-222 (GEPKAKKPRCTD).

This sequence belongs to the eukaryotic RPC3/POLR3C RNA polymerase subunit family. Component of the RNA polymerase III complex consisting of 17 subunits: a ten-subunit horseshoe-shaped catalytic core composed of POLR3A/RPC1, POLR3B/RPC2, POLR1C/RPAC1, POLR1D/RPAC2, POLR3K/RPC10, POLR2E/RPABC1, POLR2F/RPABC2, POLR2H/RPABC3, POLR2K/RPABC4 and POLR2L/RPABC5; a mobile stalk composed of two subunits POLR3H/RPC8 and CRCP/RPC9, protruding from the core and functioning primarily in transcription initiation; and additional subunits homologous to general transcription factors of the RNA polymerase II machinery, POLR3C/RPC3-POLR3F/RPC6-POLR3G/RPC7 heterotrimer required for transcription initiation and POLR3D/RPC4-POLR3E/RPC5 heterodimer involved in both transcription initiation and termination. Directly interacts with POLR3G/RPC7 and POLR3GL. Directly interacts with POLR3F/RPC6. Interacts with GTF3C4. As part of the RNA polymerase III complex, interacts with PKP2.

It is found in the nucleus. Functionally, DNA-dependent RNA polymerase catalyzes the transcription of DNA into RNA using the four ribonucleoside triphosphates as substrates. Specific peripheric component of RNA polymerase III (Pol III) which synthesizes small non-coding RNAs including 5S rRNA, snRNAs, tRNAs and miRNAs from at least 500 distinct genomic loci. Part of POLR3C/RPC3-POLR3F/RPC6-POLR3G/RPC7 heterotrimer, coordinates the dynamics of Pol III stalk and clamp modules during the transition from apo to elongation state. Pol III plays a key role in sensing and limiting infection by intracellular bacteria and DNA viruses. Acts as a nuclear and cytosolic DNA sensor involved in innate immune response. Can sense non-self dsDNA that serves as template for transcription into dsRNA. The non-self RNA polymerase III transcripts, such as Epstein-Barr virus-encoded RNAs (EBERs) induce type I interferon and NF-kappa-B through the RIG-I pathway. Preferentially binds single-stranded DNA (ssDNA) in a sequence-independent manner. The polypeptide is DNA-directed RNA polymerase III subunit RPC3 (Rattus norvegicus (Rat)).